The following is a 512-amino-acid chain: Dihydroniloticin synthase CYP71CD1 (512 aa).

Residues 7-27 (YFTVTSLLVFLTFLLRLVWGW) traverse the membrane as a helical segment. Residue Cys451 participates in heme binding.

The protein belongs to the cytochrome P450 family. It depends on heme as a cofactor. In terms of tissue distribution, accumulates in mature fruits and in juice vesicles.

Its subcellular location is the membrane. It carries out the reaction tirucalla-7,24-dien-3beta-ol + 2 reduced [NADPH--hemoprotein reductase] + 2 O2 = dihydroniloticin + 2 oxidized [NADPH--hemoprotein reductase] + 2 H2O + 2 H(+). The protein operates within secondary metabolite biosynthesis; terpenoid biosynthesis. Its function is as follows. Monooxygenase involved in the biosynthesis of limonoids triterpene natural products such as limonin, a compound with insecticidal activity responsible for the bitter taste in citrus. Catalyzes the conversion of tirucalladienol to dihydroniloticin. This chain is Dihydroniloticin synthase CYP71CD1, found in Citrus sinensis (Sweet orange).